The primary structure comprises 130 residues: Ribosome-binding factor A (130 aa).

This sequence belongs to the RbfA family. Monomer. Binds 30S ribosomal subunits, but not 50S ribosomal subunits or 70S ribosomes.

The protein localises to the cytoplasm. Its function is as follows. One of several proteins that assist in the late maturation steps of the functional core of the 30S ribosomal subunit. Associates with free 30S ribosomal subunits (but not with 30S subunits that are part of 70S ribosomes or polysomes). Required for efficient processing of 16S rRNA. May interact with the 5'-terminal helix region of 16S rRNA. The sequence is that of Ribosome-binding factor A from Prochlorococcus marinus (strain MIT 9301).